Reading from the N-terminus, the 200-residue chain is Putative 3-methyladenine DNA glycosylase (200 aa).

This sequence belongs to the DNA glycosylase MPG family.

The polypeptide is Putative 3-methyladenine DNA glycosylase (Methanocella arvoryzae (strain DSM 22066 / NBRC 105507 / MRE50)).